Consider the following 377-residue polypeptide: Chaperone protein DnaJ (377 aa).

Residues aspartate 5 to glycine 70 enclose the J domain. Residues glycine 132–threonine 210 form a CR-type zinc finger. Zn(2+) is bound by residues cysteine 145, cysteine 148, cysteine 162, cysteine 165, cysteine 184, cysteine 187, cysteine 198, and cysteine 201. 4 CXXCXGXG motif repeats span residues cysteine 145–glycine 152, cysteine 162–glycine 169, cysteine 184–glycine 191, and cysteine 198–glycine 205.

The protein belongs to the DnaJ family. As to quaternary structure, homodimer. Zn(2+) is required as a cofactor.

The protein localises to the cytoplasm. Participates actively in the response to hyperosmotic and heat shock by preventing the aggregation of stress-denatured proteins and by disaggregating proteins, also in an autonomous, DnaK-independent fashion. Unfolded proteins bind initially to DnaJ; upon interaction with the DnaJ-bound protein, DnaK hydrolyzes its bound ATP, resulting in the formation of a stable complex. GrpE releases ADP from DnaK; ATP binding to DnaK triggers the release of the substrate protein, thus completing the reaction cycle. Several rounds of ATP-dependent interactions between DnaJ, DnaK and GrpE are required for fully efficient folding. Also involved, together with DnaK and GrpE, in the DNA replication of plasmids through activation of initiation proteins. This chain is Chaperone protein DnaJ, found in Klebsiella pneumoniae subsp. pneumoniae (strain ATCC 700721 / MGH 78578).